Reading from the N-terminus, the 1091-residue chain is ATP-dependent helicase/deoxyribonuclease subunit B (1091 aa).

This sequence belongs to the helicase family. AddB/RexB type 2 subfamily. In terms of assembly, heterodimer of AddA and RexB. Mg(2+) serves as cofactor.

Functionally, the heterodimer acts as both an ATP-dependent DNA helicase and an ATP-dependent, dual-direction single-stranded exonuclease. Recognizes the chi site generating a DNA molecule suitable for the initiation of homologous recombination. This subunit has 5' -&gt; 3' nuclease activity but not helicase activity. The chain is ATP-dependent helicase/deoxyribonuclease subunit B from Streptococcus pneumoniae (strain Hungary19A-6).